Reading from the N-terminus, the 212-residue chain is ER lumen protein-retaining receptor 2 (212 aa).

The Lumenal segment spans residues 1–4; it reads MNIF. Residues 5–24 form a helical membrane-spanning segment; it reads RLTGDLSHLAAIVILLLKIW. Residues 25-32 are Cytoplasmic-facing; that stretch reads KTRSCAGI. Residues 33-52 form a helical membrane-spanning segment; the sequence is SGKSQLLFALVFTTRYLDLF. An interaction with the K-D-E-L motif on target proteins region spans residues 47–48; that stretch reads RY. Topologically, residues 53–58 are lumenal; the sequence is TSFISL. Residues 59–79 traverse the membrane as a helical segment; it reads YNTSMKLIYIACSYATVYLIY. The Cytoplasmic segment spans residues 80–92; the sequence is MKFKATYDGNHDT. Residues 93 to 110 traverse the membrane as a helical segment; sequence FRVEFLVVPVGGLSFLVN. Topologically, residues 111-116 are lumenal; sequence HDFSPL. A helical membrane pass occupies residues 117 to 135; that stretch reads EILWTFSIYLESVAILPQL. Over 136-149 the chain is Cytoplasmic; it reads FMISKTGEAETITT. A helical membrane pass occupies residues 150 to 168; that stretch reads HYLFFLGLYRALYLVNWIW. The interaction with the K-D-E-L motif on target proteins stretch occupies residues 159 to 169; sequence RALYLVNWIWR. Residues 169–178 lie on the Lumenal side of the membrane; sequence RFYFEGFFDL. Residues 179-199 traverse the membrane as a helical segment; it reads IAVVAGVVQTILYCDFFYLYI. Topologically, residues 200 to 212 are cytoplasmic; it reads TKVLKGKKLSLPA. The important for recycling of cargo proteins with the sequence motif K-D-E-L from the Golgi to the endoplasmic reticulum stretch occupies residues 204–207; it reads KGKK.

The protein belongs to the ERD2 family.

It localises to the endoplasmic reticulum membrane. Its subcellular location is the golgi apparatus membrane. The protein resides in the cytoplasmic vesicle. The protein localises to the COPI-coated vesicle membrane. In terms of biological role, membrane receptor that binds the K-D-E-L sequence motif in the C-terminal part of endoplasmic reticulum resident proteins and maintains their localization in that compartment by participating to their vesicle-mediated recycling back from the Golgi. Binding is pH dependent, and is optimal at pH 5-5.4. In Mus musculus (Mouse), this protein is ER lumen protein-retaining receptor 2 (Kdelr2).